The primary structure comprises 215 residues: Pyrrolidone-carboxylate peptidase (215 aa).

Residues E78, C141, and H165 contribute to the active site.

This sequence belongs to the peptidase C15 family. Homotetramer.

Its subcellular location is the cytoplasm. It catalyses the reaction Release of an N-terminal pyroglutamyl group from a polypeptide, the second amino acid generally not being Pro.. Removes 5-oxoproline from various penultimate amino acid residues except L-proline. This chain is Pyrrolidone-carboxylate peptidase, found in Streptococcus pyogenes serotype M12 (strain MGAS2096).